The chain runs to 475 residues: Probable UDP-N-acetylglucosamine pyrophosphorylase (475 aa).

A Substrate binding motif is present at residues 103–106 (LAGG). UTP is bound by residues 103-106 (LAGG), Lys-117, Gln-194, and Gly-220. Residue Asn-221 participates in substrate binding. Asp-251 contacts UTP. The Substrate binding signature appears at 301–302 (EY). Lys-378 is a UTP binding site. Ser-405 carries the phosphoserine modification. Position 410 (Lys-410) interacts with substrate.

The protein belongs to the UDPGP type 1 family.

Its subcellular location is the cytoplasm. The protein resides in the nucleus. The enzyme catalyses N-acetyl-alpha-D-glucosamine 1-phosphate + UTP + H(+) = UDP-N-acetyl-alpha-D-glucosamine + diphosphate. The protein operates within nucleotide-sugar biosynthesis; UDP-N-acetyl-alpha-D-glucosamine biosynthesis; UDP-N-acetyl-alpha-D-glucosamine from N-acetyl-alpha-D-glucosamine 1-phosphate: step 1/1. The sequence is that of Probable UDP-N-acetylglucosamine pyrophosphorylase (uap1) from Schizosaccharomyces pombe (strain 972 / ATCC 24843) (Fission yeast).